Here is a 411-residue protein sequence, read N- to C-terminus: Stearoyl-[acyl-carrier-protein] 9-desaturase 2, chloroplastic (411 aa).

Residues Met1 to Val44 constitute a chloroplast transit peptide. The Fe cation site is built by Glu148, Glu186, His189, Glu239, Glu272, and His275.

It belongs to the fatty acid desaturase type 2 family. Homodimer. Fe(2+) is required as a cofactor. As to expression, preferentially expressed in roots and flowers.

It is found in the plastid. The protein resides in the chloroplast. It carries out the reaction octadecanoyl-[ACP] + 2 reduced [2Fe-2S]-[ferredoxin] + O2 + 2 H(+) = (9Z)-octadecenoyl-[ACP] + 2 oxidized [2Fe-2S]-[ferredoxin] + 2 H2O. Its pathway is lipid metabolism; fatty acid metabolism. Its function is as follows. Converts stearoyl-ACP to oleoyl-ACP by introduction of a cis double bond between carbons 9 and 10 of the acyl chain. Exhibits delta-9 palmitoyl-[acyl-carrier-protein] desaturase (PAD) activity. Involved in omega-7 monounsaturated fatty acid biosynthesis, especially in the endosperm oil. The protein is Stearoyl-[acyl-carrier-protein] 9-desaturase 2, chloroplastic (S-ACP-DES2) of Arabidopsis thaliana (Mouse-ear cress).